A 114-amino-acid chain; its full sequence is uncharacterized protein (114 aa).

A disordered region spans residues 1–37; it reads MLKKILSLFKKEEPKTEEKPTEVEEKKEEREEKEEKK. A compositionally biased stretch (basic and acidic residues) spans 9–37; sequence FKKEEPKTEEKPTEVEEKKEEREEKEEKK.

This is an uncharacterized protein from Aquifex aeolicus (strain VF5).